The chain runs to 148 residues: Urease accessory protein UreE (148 aa).

The protein belongs to the UreE family.

It is found in the cytoplasm. In terms of biological role, involved in urease metallocenter assembly. Binds nickel. Probably functions as a nickel donor during metallocenter assembly. This Lysinibacillus sphaericus (strain C3-41) protein is Urease accessory protein UreE.